Here is a 93-residue protein sequence, read N- to C-terminus: Acylphosphatase (93 aa).

The 87-residue stretch at 7–93 (CLKAVISGKV…GEFRAFEILR (87 aa)) folds into the Acylphosphatase-like domain. Catalysis depends on residues R22 and N40.

It belongs to the acylphosphatase family.

It catalyses the reaction an acyl phosphate + H2O = a carboxylate + phosphate + H(+). The chain is Acylphosphatase (acyP) from Acaryochloris marina (strain MBIC 11017).